The chain runs to 155 residues: Probable tellurium resistance transcriptional regulator TerW (155 aa).

In terms of biological role, involved in tellurite resistance. TerW binds specifically to the potential promoter region of the terZABCDE operon and probably regulates expression of the genes. The polypeptide is Probable tellurium resistance transcriptional regulator TerW (Escherichia coli).